A 1100-amino-acid polypeptide reads, in one-letter code: DNA repair protein RAD1 (1100 aa).

The interval methionine 1–glutamate 47 is disordered. The segment covering arginine 20–lysine 30 has biased composition (polar residues). Over residues isoleucine 31–glutamate 47 the composition is skewed to basic and acidic residues. Residue serine 613 is modified to Phosphoserine. An ERCC4 domain is found at valine 821–glutamate 901. A disordered region spans residues glutamate 1063 to valine 1100. Acidic residues predominate over residues glutamate 1065–leucine 1076. At serine 1071 the chain carries Phosphoserine. Threonine 1072 carries the post-translational modification Phosphothreonine. The segment covering threonine 1082–valine 1100 has biased composition (basic and acidic residues).

The protein belongs to the XPF family. In terms of assembly, component of the nucleotide excision repair factor 1 (NEF1) complex consisting of RAD1, RAD10 and RAD14. Interacts with SAW1.

The protein localises to the nucleus. Involved in nucleotide excision repair of DNA damaged with UV light, bulky adducts, or cross-linking agents. Along with RAD10 forms an endonuclease that specifically degrades single-stranded DNA. The chain is DNA repair protein RAD1 (RAD1) from Saccharomyces cerevisiae (strain ATCC 204508 / S288c) (Baker's yeast).